Here is a 147-residue protein sequence, read N- to C-terminus: Large ribosomal subunit protein uL13 (147 aa).

This sequence belongs to the universal ribosomal protein uL13 family. As to quaternary structure, part of the 50S ribosomal subunit.

Its function is as follows. This protein is one of the early assembly proteins of the 50S ribosomal subunit, although it is not seen to bind rRNA by itself. It is important during the early stages of 50S assembly. The protein is Large ribosomal subunit protein uL13 of Latilactobacillus sakei subsp. sakei (strain 23K) (Lactobacillus sakei subsp. sakei).